A 120-amino-acid polypeptide reads, in one-letter code: Large ribosomal subunit protein uL18 (120 aa).

Part of the 50S ribosomal subunit; part of the 5S rRNA/L5/L18/L25 subcomplex. Contacts the 5S and 23S rRNAs.

This is one of the proteins that bind and probably mediate the attachment of the 5S RNA into the large ribosomal subunit, where it forms part of the central protuberance. This chain is Large ribosomal subunit protein uL18, found in Rhodopseudomonas palustris (strain ATCC BAA-98 / CGA009).